Here is a 100-residue protein sequence, read N- to C-terminus: Aspartyl/glutamyl-tRNA(Asn/Gln) amidotransferase subunit C (100 aa).

It belongs to the GatC family. Heterotrimer of A, B and C subunits.

The enzyme catalyses L-glutamyl-tRNA(Gln) + L-glutamine + ATP + H2O = L-glutaminyl-tRNA(Gln) + L-glutamate + ADP + phosphate + H(+). It carries out the reaction L-aspartyl-tRNA(Asn) + L-glutamine + ATP + H2O = L-asparaginyl-tRNA(Asn) + L-glutamate + ADP + phosphate + 2 H(+). In terms of biological role, allows the formation of correctly charged Asn-tRNA(Asn) or Gln-tRNA(Gln) through the transamidation of misacylated Asp-tRNA(Asn) or Glu-tRNA(Gln) in organisms which lack either or both of asparaginyl-tRNA or glutaminyl-tRNA synthetases. The reaction takes place in the presence of glutamine and ATP through an activated phospho-Asp-tRNA(Asn) or phospho-Glu-tRNA(Gln). This chain is Aspartyl/glutamyl-tRNA(Asn/Gln) amidotransferase subunit C, found in Rickettsia canadensis (strain McKiel).